The sequence spans 284 residues: 4-hydroxybenzoate octaprenyltransferase (284 aa).

The next 7 helical transmembrane spans lie at 33-53 (VIAA…LGVF), 93-113 (IGLF…MNPL), 136-156 (YLPQ…AWAA), 159-179 (GELP…TIAY), 209-229 (LVIG…GQHY), 231-248 (LGQS…LFVY), and 264-284 (AFLN…IAFW).

Belongs to the UbiA prenyltransferase family. Mg(2+) is required as a cofactor.

Its subcellular location is the cell inner membrane. It catalyses the reaction all-trans-octaprenyl diphosphate + 4-hydroxybenzoate = 4-hydroxy-3-(all-trans-octaprenyl)benzoate + diphosphate. The protein operates within cofactor biosynthesis; ubiquinone biosynthesis. Catalyzes the prenylation of para-hydroxybenzoate (PHB) with an all-trans polyprenyl group. Mediates the second step in the final reaction sequence of ubiquinone-8 (UQ-8) biosynthesis, which is the condensation of the polyisoprenoid side chain with PHB, generating the first membrane-bound Q intermediate 3-octaprenyl-4-hydroxybenzoate. This Vibrio campbellii (strain ATCC BAA-1116) protein is 4-hydroxybenzoate octaprenyltransferase.